Here is a 486-residue protein sequence, read N- to C-terminus: Stretch-activated cation channel yam8 (486 aa).

A signal peptide spans 1–24 (MFFFSTHLILKILFFWSITRNIFG). Residues 25 to 464 (ATYTSLLLNN…PGVEFYESGS (440 aa)) lie on the Extracellular side of the membrane. 5 N-linked (GlcNAc...) asparagine glycosylation sites follow: N33, N49, N59, N82, and N93. The helical transmembrane segment at 465–485 (ALLNISWRTFFISLIFWILFV) threads the bilayer. E486 is a topological domain (cytoplasmic).

It is found in the cell membrane. In terms of biological role, calcium-permeable, cation-selective stretch-activated channel (SAC) that functions together with CCH1 to mediate calcium entry into cells. Required during mating. The polypeptide is Stretch-activated cation channel yam8 (Schizosaccharomyces pombe (strain 972 / ATCC 24843) (Fission yeast)).